The chain runs to 530 residues: MTPFAYKLPIRALWLGLLSLLLVGCQIDSEPKSELEKIRERGVLRVGTLNNPLSYYIGPDGPTGLDYELAREFAKELGVKLEMKPAYRLSSLFPALKNGEVDIIAAGLSQSEERLKDFRAGPAYYYVSQQVVYKKGDWRPRSFKQLVERQQTLLKDNPELAFFSVVDDSHFEHTLLAKQQKYPDFQFHVDSNSDVNDLLKKVSQGELLFTMADSVEVSLSQRIYPELAAAFELTEDQPISWFIRRSDDESLYALMIEFFGNLKQSGYLASLEEKYIGHIGAFDYVDTRAFIRALDTRLPRWTPLFQKYSAEFDWRLVAALAYQESHWNPYAKSPTGVRGLMMLTLPTARSVGVSDRLDPEQSIRGGVEYLRRMMERVPDSISEHEKIWFALASYNIGYGHMMDARRLTKSQGADPDSWADVKDRLPQLQQKKYFTQTRYGYARGDEARNYVENIRRYYQSIIGHLEQRQLATGDESIEDLTVIALDEEFFNEEANREILDEEAEALESESLENSESSAEPSAKPSTESKN.

Positions 1–27 are cleaved as a signal peptide; it reads MTPFAYKLPIRALWLGLLSLLLVGCQI. Residues 28–279 are non-LT domain; the sequence is DSEPKSELEK…SLEEKYIGHI (252 aa). The LT domain stretch occupies residues 280 to 530; sequence GAFDYVDTRA…SAKPSTESKN (251 aa). Residue glutamate 324 is part of the active site. The interval 505–530 is disordered; the sequence is ALESESLENSESSAEPSAKPSTESKN. Residues 513-530 are compositionally biased toward low complexity; sequence NSESSAEPSAKPSTESKN.

It in the N-terminal section; belongs to the bacterial solute-binding protein 3 family. This sequence in the C-terminal section; belongs to the transglycosylase Slt family.

The protein resides in the cell outer membrane. The enzyme catalyses Exolytic cleavage of the (1-&gt;4)-beta-glycosidic linkage between N-acetylmuramic acid (MurNAc) and N-acetylglucosamine (GlcNAc) residues in peptidoglycan, from either the reducing or the non-reducing ends of the peptidoglycan chains, with concomitant formation of a 1,6-anhydrobond in the MurNAc residue.. In terms of biological role, murein-degrading enzyme that degrades murein glycan strands and insoluble, high-molecular weight murein sacculi, with the concomitant formation of a 1,6-anhydromuramoyl product. Lytic transglycosylases (LTs) play an integral role in the metabolism of the peptidoglycan (PG) sacculus. Their lytic action creates space within the PG sacculus to allow for its expansion as well as for the insertion of various structures such as secretion systems and flagella. The polypeptide is Membrane-bound lytic murein transglycosylase F (Vibrio cholerae serotype O1 (strain ATCC 39541 / Classical Ogawa 395 / O395)).